A 428-amino-acid chain; its full sequence is 3-phosphoshikimate 1-carboxyvinyltransferase (428 aa).

Residues Lys23, Ser24, and Arg28 each contribute to the 3-phosphoshikimate site. Lys23 is a binding site for phosphoenolpyruvate. The phosphoenolpyruvate site is built by Gly97 and Arg125. 3-phosphoshikimate is bound by residues Ser170, Ser171, Gln172, Ser198, Asp314, Asn337, and Lys341. Phosphoenolpyruvate is bound at residue Gln172. The active-site Proton acceptor is the Asp314. Phosphoenolpyruvate contacts are provided by Arg345, Arg387, and Lys412.

The protein belongs to the EPSP synthase family. In terms of assembly, monomer.

It localises to the cytoplasm. It carries out the reaction 3-phosphoshikimate + phosphoenolpyruvate = 5-O-(1-carboxyvinyl)-3-phosphoshikimate + phosphate. The protein operates within metabolic intermediate biosynthesis; chorismate biosynthesis; chorismate from D-erythrose 4-phosphate and phosphoenolpyruvate: step 6/7. Functionally, catalyzes the transfer of the enolpyruvyl moiety of phosphoenolpyruvate (PEP) to the 5-hydroxyl of shikimate-3-phosphate (S3P) to produce enolpyruvyl shikimate-3-phosphate and inorganic phosphate. This chain is 3-phosphoshikimate 1-carboxyvinyltransferase, found in Buchnera aphidicola subsp. Schizaphis graminum (strain Sg).